The primary structure comprises 74 residues: Salivary glue protein Sgs-7 (74 aa).

The first 23 residues, 1–23 (MKLIAVTIIACILLIGFSDLALG), serve as a signal peptide directing secretion.

The protein is Salivary glue protein Sgs-7 (Sgs7) of Drosophila melanogaster (Fruit fly).